The following is a 308-amino-acid chain: Tyrosine recombinase XerC (308 aa).

In terms of domain architecture, Core-binding (CB) spans 20–101 (SKLHTLIDDF…SVKAFSSWAQ (82 aa)). The Tyr recombinase domain occupies 122-302 (DLPKILGEQQ…SNKRLLEAFN (181 aa)). Active-site residues include R163, K187, H254, R257, and H280. Y289 (O-(3'-phospho-DNA)-tyrosine intermediate) is an active-site residue.

Belongs to the 'phage' integrase family. XerC subfamily. Forms a cyclic heterotetrameric complex composed of two molecules of XerC and two molecules of XerD.

It is found in the cytoplasm. Its function is as follows. Site-specific tyrosine recombinase, which acts by catalyzing the cutting and rejoining of the recombining DNA molecules. The XerC-XerD complex is essential to convert dimers of the bacterial chromosome into monomers to permit their segregation at cell division. It also contributes to the segregational stability of plasmids. This chain is Tyrosine recombinase XerC, found in Corynebacterium glutamicum (strain ATCC 13032 / DSM 20300 / JCM 1318 / BCRC 11384 / CCUG 27702 / LMG 3730 / NBRC 12168 / NCIMB 10025 / NRRL B-2784 / 534).